The chain runs to 109 residues: Thiosulfate sulfurtransferase GlpE (109 aa).

Positions 16-104 constitute a Rhodanese domain; sequence RSNGAVVVDI…WRATFPSETA (89 aa). Residue cysteine 64 is the Cysteine persulfide intermediate of the active site.

Belongs to the GlpE family.

The protein localises to the cytoplasm. It catalyses the reaction thiosulfate + hydrogen cyanide = thiocyanate + sulfite + 2 H(+). It carries out the reaction thiosulfate + [thioredoxin]-dithiol = [thioredoxin]-disulfide + hydrogen sulfide + sulfite + 2 H(+). Its function is as follows. Transferase that catalyzes the transfer of sulfur from thiosulfate to thiophilic acceptors such as cyanide or dithiols. May function in a CysM-independent thiosulfate assimilation pathway by catalyzing the conversion of thiosulfate to sulfite, which can then be used for L-cysteine biosynthesis. The protein is Thiosulfate sulfurtransferase GlpE of Ectopseudomonas mendocina (strain ymp) (Pseudomonas mendocina).